We begin with the raw amino-acid sequence, 299 residues long: Taste receptor type 2 member 4 (299 aa).

The Extracellular portion of the chain corresponds to 1–9 (MLRLFYFSA). Residues 10–30 (VIASVILNFVGIIMNLFITVV) form a helical membrane-spanning segment. Residues 31–46 (NCKTWVKSHRISSSDR) are Cytoplasmic-facing. The chain crosses the membrane as a helical span at residues 47–67 (ILFSLGITRFLMLGLFLVNTI). Over 68 to 81 (YFVSSNMERSVYLS) the chain is Extracellular. Residues 82-102 (AFFVLCFMFLDSSSLWFVTLL) form a helical membrane-spanning segment. Residues 103–131 (NILYCVKITNFQHSVFLLLKRSISPKIPR) are Cytoplasmic-facing. The chain crosses the membrane as a helical span at residues 132–152 (LLLAFVLISAFTTCLYITLSQ). The Extracellular portion of the chain corresponds to 153–172 (ASPFPELVTTRNNTSFNISE). 3 N-linked (GlcNAc...) asparagine glycosylation sites follow: Asn-164, Asn-165, and Asn-169. Residues 173 to 193 (GILSLVVSLVLSSSLQFIINV) form a helical membrane-spanning segment. Residues 194–230 (TSASLLIHSLRRHIQKMQKNATGFWNPQMEAHVGAMK) lie on the Cytoplasmic side of the membrane. The chain crosses the membrane as a helical span at residues 231 to 251 (LMVYFLILYIPYSVATLVQYL). Over 252 to 262 (PFYAGMDMGTK) the chain is Extracellular. Residues 263 to 283 (SICLIFATLYSPGHSVLIIIT) form a helical membrane-spanning segment. At 284–299 (HPKLKTTAKKILCFKK) the chain is on the cytoplasmic side.

It belongs to the G-protein coupled receptor T2R family.

It is found in the membrane. It localises to the cell projection. The protein resides in the cilium membrane. Its function is as follows. Gustducin-coupled receptor implicated in the perception of bitter compounds in the oral cavity and the gastrointestinal tract. Signals through PLCB2 and the calcium-regulated cation channel TRPM5. In airway epithelial cells, binding of denatonium increases the intracellular calcium ion concentration and stimulates ciliary beat frequency. The sequence is that of Taste receptor type 2 member 4 (TAS2R4) from Gorilla gorilla gorilla (Western lowland gorilla).